Reading from the N-terminus, the 2186-residue chain is MAGPVATSDRQQRLIFFGDQTVDALPCIKILTAQAHRLPALRRFLRDAADVIQVLLSSLEFDDHDHYRRFETICELAEIYSKQDGTHETIACALWTTAQFGDLVMRAELNPSILTGGQQSADPTYVVGICGGLLPAAATATARDINELLDIGRKLVAVAFRLGVAQWRRAMDIEGKPGRWAVTIVNVPAKQIRTILDAFNEDMEIPKHRQFYISFLAKGWVTVSGPPSLFPELWAYSSTLNAASKMQLPLGTPAHAAHLPPVNVSEIVGTGDVLDLTVRENFFTVSTSTCQPFQCQDLGSLLQESLRDITGKTLNIAGVNDYVISALDRNTPVRVSSFGPASQIASFKKTLEEAGYQVELDLGDPSLGNPEYPIDADSRDGSNLIAVVGQSVRFPGSEDVETFWENIKAGRSFETEIPASRFDLAHHYDATGSKTSSVTTKYGSFLENPGLFDNRLFNVSPREAKQMDPIQRILMMCSYEALQAAGYSPDGSLSTNSMRIATYFGQSGDDWRQVRASQEVDIYYIPGTVRSFAPGKLNYHYKWGGGNYAVDSACAASTTTMMLASQALLARDCDMALAGGGQLNAAPEPYAGLSRAGFLSKTTGGCKTFREDADGYCRGEGVGVVVLKRLEDALAENDNVLAVIRGADRNFSWDATSITHPSVSAQVKLVKSVLRNTGVEPEEIGFVEMHGTGTQAGDGVEMETVTTVFGSRPKDNPLYVGAVKANIGHGEAAAGVASVIKAIEVLRHRTIPTQAGFPGPRDPKFNHLDGMNIRIPESVVPFQPAPAPFSSDGKRKVLVNNFDASGGNNCVLLEEAPARDRETTADPRGVYTVAVSARTTNSLKNNISRLLGYLQSHPDASVADVAYTTTARRMHEDLKKAYTVQTASELVSLLQADLKKDLTAVQYRSPHSVVFAFTGQGAQYAGMGKQLFDTSAAFRESVQAFHELAVWQGFPEFLHLIADDQADVKAADPVQLQLAVVVLEMALANLWKSWGVEPGLVVGYSLGEYPALYVAGVLSVHDVIFLVGNRARLMQERCESGSYAMLATQSSPQDLEQVLGAYPSCAVACKGAPRSTVVSGPTEDITQLHSELKEKNINGTLLNVPYGFHCAQVDPILDDFRDMADGIQFNKPRIPVASSLEGTVVTEEGVFSSAYLVRQTREPVNFIGAVKAAESSGRADNTTVWIEIGPKRVLSSLVKSTLSADQGRLLHTIDDKDSNWKTIAAAMTAGYTEGMSIKWPKFHKLFSKHLTLLELPTYAFDLKDYWIPPAVPVTAAAPVAAPAADPSLPVIPVVPGFPTASLQQVRSEQINGDEAKVTFETVISHPALLAVIRGHRVGGVDLFPASGFMDMAFSAAKYIHHRTKSGQPVPEISMKHLAITHPLTPSSGQSRQIVIVTASKRSGSSVVDVSFRSRDGSAEQDHGDCKLHFDKRGSWDAEWAQTAHFINAAKKNVIANGTSPAGTGHRLPKSVVYKLFSSLVEYSGAFRAMEEVYVTDDFQKEAVASVVLPGGSSEFYVNPYWSDALIHVCGFLLNSSPNLPSQDCFLFNGLEEMRLLSDDLQPGIPYTSYVYLTEPGSSPDSQAPRPKHARGDVYVFQGEKIVGVAKGVVFQRLTRRVLATVLGGKLPGAAAPVREIAAPAPIRAVAPAPAPVAPRPVEMYRVPGVVGDEKADAAIGKILARAGANPAHITDATTFAEIGFDSLEWIELVREIRTSLDLEVPASFFFEYPKVNGLRRAISELSLDYQGPASGSVSVSSSATTTHGMTTPSSTSSAQSSQSSQTPDGPGIYANAVIDIVLSQTGFDKADLLPTTRFDDMGLDSLCTMEVVGVVREQTGLDLPASFFHQNPTVAHVRRALGSDSDGDSKPKSAPAPPAPEPVVEVAAPAPAVQAPPAILDGDLASYHCDFFLMQGSSDSTKTPLFFLPDGTGYPAVLLKLPPIFEGDNALFTCKSPLLNVAEGREVRCTIEGLAAAYAAAIQRARPHGPYLLAGYSLGGAYAFEVAKILADAGEVVQGLLFVDFNMAASVGKLHRDRNPVPVDLTVGAMEKTGWMQGIQNDDKDFNIPPAPPKIKFHALSVFKSLISYYPTPMTPSQRPRNTYALWAGIGMQDLLGTKNAGFLPAYGIIDWQMGDRHENNGPAGWEEYIGGPVKCATMPCDHLSLLMSHHWIPKSAEVIKGLLKDAMDN.

In terms of domain architecture, Starter acyltransferase (SAT) spans F16–H255. The Ketosynthase family 3 (KS3) domain occupies S382–E815. Catalysis depends on for beta-ketoacyl synthase activity residues C554, H690, and H729. Positions V914–A1204 constitute a Malonyl-CoA:ACP transacylase (MAT) domain. The tract at residues T1299–G1623 is product template (PT) domain. Residues Q1303–S1434 are N-terminal hotdog fold. One can recognise a PKS/mFAS DH domain in the interval Q1303–A1619. H1335 functions as the Proton acceptor; for dehydratase activity in the catalytic mechanism. A C-terminal hotdog fold region spans residues T1463–A1619. D1523 acts as the Proton donor; for dehydratase activity in catalysis. The Carrier 1 domain maps to V1666–S1742. O-(pantetheine 4'-phosphoryl)serine is present on S1702. Positions G1747–G1785 are disordered. The span at A1749–P1783 shows a compositional bias: low complexity. The region spanning D1784–S1861 is the Carrier 2 domain. S1821 carries the O-(pantetheine 4'-phosphoryl)serine modification. Positions L1857–P1878 are disordered. The tract at residues L1921–L2163 is thioesterase (TE) domain.

It depends on pantetheine 4'-phosphate as a cofactor.

Its pathway is secondary metabolite biosynthesis. Its function is as follows. Non-reducing polyketide synthase; part of the gene cluster that mediates the biosynthesis of menisporopsin A, a bioactive macrocyclic polylactone. The biosynthesis of menisporopsin A is performed by a reducing (man1) and a non-reducing (men2) polyketide synthase that catalyze the formation of each menisporopsin A subunits, while the esterification and cyclolactonization activities are probably peformed by the unusual thioesterase domain of men2. First, a reduced diketide intermediate, 3-hydroxybutyryl-S-ACP is produced by men1 and transferred to men2; this is followed by a second reduced diketide which is further elongated using 3 units of malonyl-coA to form a reduced pentaketide. The cyclization of this intermediate by the PT domain forms the second subunit, 2,4-dihydroxy-6-(2-hydroxy-n-propyl)benzoyl-S-ACP. The TE domain of men2 then esterifies the secondary hydroxyl group on the side chain of the second subunit with the acyl-TE of the first subunit to form the first ester intermediate. This process occurs iteratively to form a linear tetraester intermediate. The final subunit is formed by a similar process, except that an extra malonyl-CoA is required in an additional elongation step to form a reduced hexaketide intermediate, and the carbonyl group next to the secondary hydroxyl group is reduced by a trans-acting ketoreductase. Again, the PT domain catalyzes cyclization to form the largest subunit, 2,4-dihydroxy-6-(2,4-dihydroxy-n-pentyl) benzoyl-S-ACP. Then the linear pentaester intermediate is formed. In this step, if the intermediate transfer rate is slow, intra- molecular cyclization involving the secondary hydroxyl group of the pentaester intermediate may occur to form menisporopsin B. Alternatively, transfer of the pentaester intermediate to the TE domain would allow cyclolactonization to be catalyzed by the TE to form menisporopsin A. The polypeptide is Non-reducing polyketide synthase men2 (Menisporopsis theobromae).